A 232-amino-acid polypeptide reads, in one-letter code: Noggin (232 aa).

The first 27 residues, 1 to 27 (MERCPSLGVTLYALVVVLGLRATPAGG), serve as a signal peptide directing secretion. A glycan (N-linked (GlcNAc...) asparagine) is linked at Asn62. Residues 77–96 (GFMATSPPEDRPGGGGGAAG) are disordered. 4 disulfide bridges follow: Cys155/Cys192, Cys178/Cys228, Cys184/Cys230, and Cys207/Cys215.

The protein belongs to the noggin family. Homodimer. Interacts with GDF5; inhibits chondrocyte differentiation.

Its subcellular location is the secreted. Inhibitor of bone morphogenetic proteins (BMP) signaling which is required for growth and patterning of the neural tube and somite. Essential for cartilage morphogenesis and joint formation. Inhibits chondrocyte differentiation through its interaction with GDF5 and, probably, GDF6. The polypeptide is Noggin (NOG) (Homo sapiens (Human)).